We begin with the raw amino-acid sequence, 87 residues long: MKTILIFLVVISLMYSGEAQEVAHTYCGRHLADTLADLCFGVEKRSGAQYAPYFWTRQYLGSRGKRSVVDECCFRPCTLDVLLSYCD.

The N-terminal stretch at Met1–Ala19 is a signal peptide. 3 disulfide bridges follow: Cys27–Cys73, Cys39–Cys86, and Cys72–Cys77. The propeptide at Ser46–Gly64 is bombyxin B-10 C peptide.

The protein belongs to the insulin family. In terms of assembly, heterodimer of a B chain and an A chain linked by two disulfide bonds.

It localises to the secreted. Functionally, brain peptide responsible for activation of prothoracic glands to produce ecdysone in insects. The chain is Bombyxin B-10 (BBXB10) from Bombyx mori (Silk moth).